Reading from the N-terminus, the 626-residue chain is ATP-dependent zinc metalloprotease FtsH (626 aa).

At 1-5 (MNFRN) the chain is on the cytoplasmic side. A helical transmembrane segment spans residues 6–26 (LAIWLVIVAVLGGVFVVSQNS). The Periplasmic segment spans residues 27–98 (RTKSSSEISY…DVKFKSGSIS (72 aa)). A helical transmembrane segment spans residues 99-119 (FLAILVQLLPILLVVGVWLFL). Over 120–626 (MRQMQGGAKG…SPGAGASVTA (507 aa)) the chain is Cytoplasmic. 191 to 198 (GPPGTGKT) is a binding site for ATP. Residue His413 coordinates Zn(2+). Glu414 is a catalytic residue. Zn(2+) is bound by residues His417 and Asp491.

This sequence in the central section; belongs to the AAA ATPase family. In the C-terminal section; belongs to the peptidase M41 family. In terms of assembly, homohexamer. Zn(2+) serves as cofactor.

The protein resides in the cell inner membrane. Functionally, acts as a processive, ATP-dependent zinc metallopeptidase for both cytoplasmic and membrane proteins. Plays a role in the quality control of integral membrane proteins. Absence of FtsH leads to increased sigma-32 levels, which suggests, in analogy to E.coli, that sigma-32 is a substrate for FtsH. May play a role in the general stress response, as overexpression leads to improved resistance to salt stress. The protein is ATP-dependent zinc metalloprotease FtsH of Caulobacter vibrioides (strain NA1000 / CB15N) (Caulobacter crescentus).